Here is a 546-residue protein sequence, read N- to C-terminus: Phosphomethylpyrimidine synthase (546 aa).

Residues asparagine 145, methionine 174, tyrosine 203, histidine 239, 259-261 (SRG), 300-303 (DGLR), and glutamate 339 contribute to the substrate site. Residue histidine 343 coordinates Zn(2+). Tyrosine 366 contacts substrate. Histidine 407 provides a ligand contact to Zn(2+). Residues cysteine 487, cysteine 490, and cysteine 495 each contribute to the [4Fe-4S] cluster site.

The protein belongs to the ThiC family. It depends on [4Fe-4S] cluster as a cofactor.

The enzyme catalyses 5-amino-1-(5-phospho-beta-D-ribosyl)imidazole + S-adenosyl-L-methionine = 4-amino-2-methyl-5-(phosphooxymethyl)pyrimidine + CO + 5'-deoxyadenosine + formate + L-methionine + 3 H(+). It participates in cofactor biosynthesis; thiamine diphosphate biosynthesis. Functionally, catalyzes the synthesis of the hydroxymethylpyrimidine phosphate (HMP-P) moiety of thiamine from aminoimidazole ribotide (AIR) in a radical S-adenosyl-L-methionine (SAM)-dependent reaction. This is Phosphomethylpyrimidine synthase from Mycobacterium marinum (strain ATCC BAA-535 / M).